The sequence spans 191 residues: Fe/S biogenesis protein NfuA (191 aa).

Residues C149 and C152 each coordinate [4Fe-4S] cluster.

Belongs to the NfuA family. As to quaternary structure, homodimer. Requires [4Fe-4S] cluster as cofactor.

In terms of biological role, involved in iron-sulfur cluster biogenesis. Binds a 4Fe-4S cluster, can transfer this cluster to apoproteins, and thereby intervenes in the maturation of Fe/S proteins. Could also act as a scaffold/chaperone for damaged Fe/S proteins. This is Fe/S biogenesis protein NfuA from Escherichia coli O7:K1 (strain IAI39 / ExPEC).